The primary structure comprises 395 residues: MNYQPTSEDRFTFGLWTVGWQGLDPFGDATREALDPAESVRRLSQLGAYGVTFHDDELIPFGSSDNERGVAHGAGVAHQAVPAGAGRDRHEGADGDDEPVHAPGCSRDGAFTANDRDVRGTRCARAIRNIDLAVEHVARASTCAWGGREGAESGAAKDVRDALDRMKEAFDLLGEYVTEQGYDLKFAIEPKPNEPRGDILLPTVGHALAFIERLERPELYGVNPEVGHEQMAGLNFPHGIAQALWAGKLFHIDLNGQSGIKYDQDLRFGAGDLRAAFWLVDLLERAGYAGPRHFDFKPPRTENFDAVWPSAAGCMRNYLILKDRAAAFRADPQVQEALAAARLDELARPTAEDGLAALLADRSAYDTFDVDAAAARGMAFEHLDQLAMDHLLGAR.

Active-site residues include H54 and E57. Positions 80–108 (AVPAGAGRDRHEGADGDDEPVHAPGCSRD) are disordered. Mg(2+)-binding residues include E189, E225, H228, D253, D263, D265, and D295.

This sequence belongs to the xylose isomerase family. Homotetramer. Mg(2+) serves as cofactor.

It is found in the cytoplasm. The enzyme catalyses alpha-D-xylose = alpha-D-xylulofuranose. This chain is Xylose isomerase, found in Streptomyces lividans.